The chain runs to 208 residues: MSSVDTEKPAPPPLETEAPPPPPPPPPPPPPPPPPPAGYSALDVVLRILLLGSAVASVVVMVTSVQTKLIAVAGVPVLVSNKAKFQNSPAFIYFVAALSVVGLYSIITTLASFIFISKPSCSTKTILHLAIWDVLMLGLAASATGTAGGVAYVGLKGNSHVGWNKVCNTYDKFCRHVGGSIAVALFASILLVLLVWLSLFTLYSRIRK.

The disordered stretch occupies residues 1 to 36 (MSSVDTEKPAPPPLETEAPPPPPPPPPPPPPPPPPP). Residues 1 to 41 (MSSVDTEKPAPPPLETEAPPPPPPPPPPPPPPPPPPAGYSA) lie on the Cytoplasmic side of the membrane. A compositionally biased stretch (pro residues) spans 9 to 36 (PAPPPLETEAPPPPPPPPPPPPPPPPPP). Residues 42-62 (LDVVLRILLLGSAVASVVVMV) form a helical membrane-spanning segment. The Extracellular segment spans residues 63–89 (TSVQTKLIAVAGVPVLVSNKAKFQNSP). Residues 90–110 (AFIYFVAALSVVGLYSIITTL) form a helical membrane-spanning segment. Residues 111-133 (ASFIFISKPSCSTKTILHLAIWD) are Cytoplasmic-facing. Residues 134–154 (VLMLGLAASATGTAGGVAYVG) traverse the membrane as a helical segment. The Extracellular portion of the chain corresponds to 155–180 (LKGNSHVGWNKVCNTYDKFCRHVGGS). Residues 181–201 (IAVALFASILLVLLVWLSLFT) form a helical membrane-spanning segment. Residues 202-208 (LYSRIRK) are Cytoplasmic-facing.

This sequence belongs to the Casparian strip membrane proteins (CASP) family. As to quaternary structure, homodimer and heterodimers.

The protein resides in the cell membrane. This chain is CASP-like protein 1D1, found in Vitis vinifera (Grape).